A 46-amino-acid chain; its full sequence is Endochitinase 4 (46 aa).

Belongs to the glycosyl hydrolase 19 family. Chitinase class I subfamily.

The enzyme catalyses Random endo-hydrolysis of N-acetyl-beta-D-glucosaminide (1-&gt;4)-beta-linkages in chitin and chitodextrins.. Functionally, defense against chitin-containing fungal and bacterial pathogens. This Arachis hypogaea (Peanut) protein is Endochitinase 4.